The chain runs to 164 residues: Translocator protein homolog (164 aa).

5 consecutive transmembrane segments (helical) span residues 16-34, 52-72, 89-106, 112-132, and 141-163; these read WSAS…NSYK, SAFG…SHLA, ILYI…PLFY, KLAL…AKTW, and KWLI…YCLL.

It belongs to the TspO/BZRP family.

The protein resides in the mitochondrion membrane. In terms of biological role, may play a role in the transport of porphyrins and heme. The chain is Translocator protein homolog from Schizosaccharomyces pombe (strain 972 / ATCC 24843) (Fission yeast).